The following is an 86-amino-acid chain: Dynein light chain 1, cytoplasmic (86 aa).

Belongs to the dynein light chain family. In terms of assembly, homodimer. Cytoplasmic dynein consists of two catalytic heavy chains (HCs) and a number of non-catalytic subunits which present intermediate chains (ICs), light intermediate chains (LICs) and light chains (LCs). Component of the nuclear pore complex (NPC). NPC constitutes the exclusive means of nucleocytoplasmic transport. NPCs allow the passive diffusion of ions and small molecules and the active, nuclear transport receptor-mediated bidirectional transport of macromolecules such as proteins, RNAs, ribonucleoparticles (RNPs), and ribosomal subunits across the nuclear envelope. Due to its 8-fold rotational symmetry, all subunits are present with 8 copies or multiples thereof.

It localises to the cytoplasm. Its subcellular location is the cytoskeleton. The protein resides in the nucleus. It is found in the nuclear pore complex. Functionally, acts as one of several non-catalytic accessory components of the cytoplasmic dynein complex that are thought to be involved in linking dynein to cargos and to adapter proteins that regulate dynein function. Cytoplasmic dynein 1 acts as a motor for the intracellular retrograde motility of vesicles and organelles along microtubules. May play a role in changing or maintaining the spatial distribution of cytoskeletal structures. Also a component of the nuclear pore complex. This Candida glabrata (strain ATCC 2001 / BCRC 20586 / JCM 3761 / NBRC 0622 / NRRL Y-65 / CBS 138) (Yeast) protein is Dynein light chain 1, cytoplasmic (DYN2).